The following is a 164-amino-acid chain: Transcriptional repressor NrdR (164 aa).

A zinc finger spans residues 3–34; it reads CPFCRHEDSRVVDSRSLDDGSAIRRRRQCQAC. The ATP-cone domain maps to 46–136; the sequence is LTVVKRSGVA…VYRDFESLDD (91 aa).

It belongs to the NrdR family. Zn(2+) is required as a cofactor.

Its function is as follows. Negatively regulates transcription of bacterial ribonucleotide reductase nrd genes and operons by binding to NrdR-boxes. In Micrococcus luteus (strain ATCC 4698 / DSM 20030 / JCM 1464 / CCM 169 / CCUG 5858 / IAM 1056 / NBRC 3333 / NCIMB 9278 / NCTC 2665 / VKM Ac-2230) (Micrococcus lysodeikticus), this protein is Transcriptional repressor NrdR.